The following is a 576-amino-acid chain: Adenine deaminase (576 aa).

This sequence belongs to the metallo-dependent hydrolases superfamily. Adenine deaminase family. The cofactor is Mn(2+).

The enzyme catalyses adenine + H2O + H(+) = hypoxanthine + NH4(+). The protein is Adenine deaminase of Bacillus pumilus (strain SAFR-032).